A 187-amino-acid chain; its full sequence is UPF0301 protein YqgE (187 aa).

This sequence belongs to the UPF0301 (AlgH) family.

The polypeptide is UPF0301 protein YqgE (Escherichia fergusonii (strain ATCC 35469 / DSM 13698 / CCUG 18766 / IAM 14443 / JCM 21226 / LMG 7866 / NBRC 102419 / NCTC 12128 / CDC 0568-73)).